We begin with the raw amino-acid sequence, 601 residues long: Elongation factor 4 (601 aa).

A tr-type G domain is found at 5 to 187 (DKIRNFSIIA…SIVKDLPAPQ (183 aa)). Residues 17 to 22 (DHGKST) and 134 to 137 (NKVD) each bind GTP.

The protein belongs to the TRAFAC class translation factor GTPase superfamily. Classic translation factor GTPase family. LepA subfamily.

The protein localises to the cell inner membrane. It catalyses the reaction GTP + H2O = GDP + phosphate + H(+). Its function is as follows. Required for accurate and efficient protein synthesis under certain stress conditions. May act as a fidelity factor of the translation reaction, by catalyzing a one-codon backward translocation of tRNAs on improperly translocated ribosomes. Back-translocation proceeds from a post-translocation (POST) complex to a pre-translocation (PRE) complex, thus giving elongation factor G a second chance to translocate the tRNAs correctly. Binds to ribosomes in a GTP-dependent manner. The polypeptide is Elongation factor 4 (Maridesulfovibrio salexigens (strain ATCC 14822 / DSM 2638 / NCIMB 8403 / VKM B-1763) (Desulfovibrio salexigens)).